Here is a 264-residue protein sequence, read N- to C-terminus: Thymidylate synthase (264 aa).

Arg-21 serves as a coordination point for dUMP. His-51 contacts (6R)-5,10-methylene-5,6,7,8-tetrahydrofolate. 126-127 (RR) lines the dUMP pocket. Cys-146 acts as the Nucleophile in catalysis. Residues 166–169 (RSAD), Asn-177, and 207–209 (HLY) contribute to the dUMP site. A (6R)-5,10-methylene-5,6,7,8-tetrahydrofolate-binding site is contributed by Asp-169. Ala-263 contacts (6R)-5,10-methylene-5,6,7,8-tetrahydrofolate.

This sequence belongs to the thymidylate synthase family. Bacterial-type ThyA subfamily. As to quaternary structure, homodimer.

The protein localises to the cytoplasm. The enzyme catalyses dUMP + (6R)-5,10-methylene-5,6,7,8-tetrahydrofolate = 7,8-dihydrofolate + dTMP. It functions in the pathway pyrimidine metabolism; dTTP biosynthesis. In terms of biological role, catalyzes the reductive methylation of 2'-deoxyuridine-5'-monophosphate (dUMP) to 2'-deoxythymidine-5'-monophosphate (dTMP) while utilizing 5,10-methylenetetrahydrofolate (mTHF) as the methyl donor and reductant in the reaction, yielding dihydrofolate (DHF) as a by-product. This enzymatic reaction provides an intracellular de novo source of dTMP, an essential precursor for DNA biosynthesis. The protein is Thymidylate synthase of Rhizobium johnstonii (strain DSM 114642 / LMG 32736 / 3841) (Rhizobium leguminosarum bv. viciae).